Consider the following 297-residue polypeptide: Glycine--tRNA ligase alpha subunit (297 aa).

This sequence belongs to the class-II aminoacyl-tRNA synthetase family. As to quaternary structure, tetramer of two alpha and two beta subunits.

It is found in the cytoplasm. It carries out the reaction tRNA(Gly) + glycine + ATP = glycyl-tRNA(Gly) + AMP + diphosphate. In Sulfurihydrogenibium sp. (strain YO3AOP1), this protein is Glycine--tRNA ligase alpha subunit.